The primary structure comprises 217 residues: Large ribosomal subunit protein uL1 (217 aa).

This sequence belongs to the universal ribosomal protein uL1 family.

This is Large ribosomal subunit protein uL1 (RpL10A) from Spodoptera frugiperda (Fall armyworm).